Consider the following 444-residue polypeptide: ATP-dependent RNA helicase SrmB (444 aa).

Positions 4-32 (TTFSELELDESLLEALQDKGFTRPTAIQA) match the Q motif motif. Positions 35–209 (IPPALDGRDV…AERLLEDPVE (175 aa)) constitute a Helicase ATP-binding domain. 48-55 (APTGTGKT) lines the ATP pocket. The DEAD box motif lies at 157–160 (DEAD). The Helicase C-terminal domain occupies 238-387 (LLVHLLKQPE…ELRPKTRAPS (150 aa)). Basic and acidic residues predominate over residues 382 to 391 (KTRAPSEKQT). A disordered region spans residues 382-444 (KTRAPSEKQT…TGVPPQTTEE (63 aa)). Composition is skewed to basic residues over residues 394 to 406 (PSKK…AEKK) and 414 to 432 (PRVK…RRKP).

It belongs to the DEAD box helicase family. SrmB subfamily. In terms of assembly, interacts with the 50S ribosomal subunit. Forms a complex with the 50S ribosomal proteins L4 and L24, and a region near the 5'-end of 23S rRNA.

It localises to the cytoplasm. It catalyses the reaction ATP + H2O = ADP + phosphate + H(+). Functionally, DEAD-box RNA helicase involved in the assembly of the 50S ribosomal subunit at low temperature. Exhibits RNA-stimulated ATP hydrolysis and RNA unwinding activity. Acts before DeaD. The chain is ATP-dependent RNA helicase SrmB from Escherichia coli (strain K12).